Consider the following 218-residue polypeptide: Thiopurine S-methyltransferase (218 aa).

Residues Trp10, Leu45, Glu66, and Arg123 each contribute to the S-adenosyl-L-methionine site.

This sequence belongs to the class I-like SAM-binding methyltransferase superfamily. TPMT family.

The protein resides in the cytoplasm. It carries out the reaction S-adenosyl-L-methionine + a thiopurine = S-adenosyl-L-homocysteine + a thiopurine S-methylether.. This chain is Thiopurine S-methyltransferase, found in Xanthomonas euvesicatoria pv. vesicatoria (strain 85-10) (Xanthomonas campestris pv. vesicatoria).